The chain runs to 191 residues: Peptidyl-tRNA hydrolase (191 aa).

Tyr-14 contributes to the tRNA binding site. Catalysis depends on His-19, which acts as the Proton acceptor. The tRNA site is built by Tyr-64, Asn-66, and Asn-112.

Belongs to the PTH family. In terms of assembly, monomer.

Its subcellular location is the cytoplasm. It catalyses the reaction an N-acyl-L-alpha-aminoacyl-tRNA + H2O = an N-acyl-L-amino acid + a tRNA + H(+). In terms of biological role, hydrolyzes ribosome-free peptidyl-tRNAs (with 1 or more amino acids incorporated), which drop off the ribosome during protein synthesis, or as a result of ribosome stalling. Its function is as follows. Catalyzes the release of premature peptidyl moieties from peptidyl-tRNA molecules trapped in stalled 50S ribosomal subunits, and thus maintains levels of free tRNAs and 50S ribosomes. In Syntrophotalea carbinolica (strain DSM 2380 / NBRC 103641 / GraBd1) (Pelobacter carbinolicus), this protein is Peptidyl-tRNA hydrolase.